A 266-amino-acid polypeptide reads, in one-letter code: PTS system sorbose-specific EIIC component (266 aa).

One can recognise a PTS EIIC type-4 domain in the interval 1–237 (MEISTLQIIA…GGVGVIIALI (237 aa)). 7 helical membrane-spanning segments follow: residues 3–23 (ISTL…MGSV), 33–53 (LIAC…VMLG), 79–99 (IISA…IAIA), 100–120 (LPVA…TVVF), 151–171 (VAIP…SSML), 183–203 (QIAG…MMGV), and 219–239 (YLDF…LIYI).

The protein localises to the cell inner membrane. Its function is as follows. The phosphoenolpyruvate-dependent sugar phosphotransferase system (PTS), a major carbohydrate active transport system, catalyzes the phosphorylation of incoming sugar substrates concomitant with their translocation across the cell membrane. The enzyme II SorABFM PTS system is involved in L-sorbose transport. This is PTS system sorbose-specific EIIC component from Klebsiella pneumoniae.